We begin with the raw amino-acid sequence, 281 residues long: Release factor glutamine methyltransferase (281 aa).

Residues glutamate 142 and asparagine 184 each contribute to the S-adenosyl-L-methionine site. 184-187 (NPPY) contributes to the substrate binding site. A disordered region spans residues 261 to 281 (AADHPDLNNRPRFATARKALP).

The protein belongs to the protein N5-glutamine methyltransferase family. PrmC subfamily.

It carries out the reaction L-glutaminyl-[peptide chain release factor] + S-adenosyl-L-methionine = N(5)-methyl-L-glutaminyl-[peptide chain release factor] + S-adenosyl-L-homocysteine + H(+). In terms of biological role, methylates the class 1 translation termination release factors RF1/PrfA and RF2/PrfB on the glutamine residue of the universally conserved GGQ motif. This is Release factor glutamine methyltransferase from Streptomyces coelicolor (strain ATCC BAA-471 / A3(2) / M145).